Reading from the N-terminus, the 1542-residue chain is Pleiotropic ABC efflux transporter of multiple drugs PDH1 (1542 aa).

Positions 1 to 14 (MNTPDDSSVSSVDS) are enriched in low complexity. Residues 1-61 (MNTPDDSSVS…APADGSAPLD (61 aa)) are disordered. Residues 1–517 (MNTPDDSSVS…LIRNFWRIKN (517 aa)) lie on the Cytoplasmic side of the membrane. Over residues 24-33 (NVEKRIRELA) the composition is skewed to basic and acidic residues. Polar residues predominate over residues 35–47 (SLTQQSLTSSNRS). An ABC transporter 1 domain is found at 153 to 409 (VKLLNAVWRK…FQKMGYFCPK (257 aa)). Helical transmembrane passes span 518–540 (SASV…GSMF), 552–574 (FYFR…LLEI), 603–625 (VISE…YFLV), 634–652 (FFFY…SHLF), 662–684 (LQEA…GFAI), and 773–792 (GFGV…LILC). At 793 to 1220 (EFNEGAKQKG…LFQQYWRTPD (428 aa)) the chain is on the cytoplasmic side. Residues 825-834 (TKMHTDKNDI) are compositionally biased toward basic and acidic residues. Residues 825 to 846 (TKMHTDKNDIENNSESITSNAT) form a disordered region. The segment covering 835 to 846 (ENNSESITSNAT) has biased composition (polar residues). In terms of domain architecture, ABC transporter 2 spans 885 to 1128 (FHWQNLCYDV…MIKYFEDHGA (244 aa)). Residue 921–928 (GASGAGKT) coordinates ATP. 6 helical membrane passes run 1221–1241 (YLWS…FTFF), 1256–1276 (SIFM…PTFV), 1296–1316 (AFIL…GTLA), 1342–1362 (LFWL…LFVI), 1370–1390 (TAAH…GVMA), and 1495–1515 (GIFI…YWLA). The Cytoplasmic portion of the chain corresponds to 1516-1542 (RVPKTNGKIAKNGKTAKVNFIRRLIPF).

This sequence belongs to the ABC transporter superfamily. ABCG family. PDR (TC 3.A.1.205) subfamily. In terms of processing, phosphorylated by PKA. Dephosphorylated on glucose depletion and independently rephosphorylated during glucose exposure or under stress.

The protein resides in the cell membrane. In terms of biological role, pleiotropic ABC efflux transporter that confers resistance to structurally and functionally unrelated compounds including caspofungin or azoles such as fluconazole, itraconazole, posaconazole, voriconazole, and isavuconazole. Does not play a role in the azole resistance in mature biofilms. In Candida glabrata (strain ATCC 2001 / BCRC 20586 / JCM 3761 / NBRC 0622 / NRRL Y-65 / CBS 138) (Yeast), this protein is Pleiotropic ABC efflux transporter of multiple drugs PDH1.